A 383-amino-acid chain; its full sequence is Dephospho-CoA kinase (383 aa).

Residues R3–L201 form the DPCK domain. Position 11-16 (G11–T16) interacts with ATP. The interval P196–V383 is UPF0157.

It in the N-terminal section; belongs to the CoaE family. The protein in the C-terminal section; belongs to the UPF0157 (GrpB) family.

The protein localises to the cytoplasm. The enzyme catalyses 3'-dephospho-CoA + ATP = ADP + CoA + H(+). It functions in the pathway cofactor biosynthesis; coenzyme A biosynthesis; CoA from (R)-pantothenate: step 5/5. Catalyzes the phosphorylation of the 3'-hydroxyl group of dephosphocoenzyme A to form coenzyme A. The polypeptide is Dephospho-CoA kinase (Nocardia farcinica (strain IFM 10152)).